The following is a 48-amino-acid chain: Probable antitoxin PhoAT (48 aa).

This sequence belongs to the PhoAT antitoxin family. Interacts with toxin PhoH2.

Its function is as follows. Probable antitoxin component of a type II toxin-antitoxin (TA) system. The probable cognate antitoxin is PhoAT; the toxin gene can be expressed in the absence of the antitoxin gene in M.smegmatis strain mc(2)155. The chain is Probable antitoxin PhoAT from Mycolicibacterium smegmatis (strain ATCC 700084 / mc(2)155) (Mycobacterium smegmatis).